Consider the following 243-residue polypeptide: MSVIRNILNSRSSKGGNFFNTLHKLLGFRPKDLSVYERAFTHRSLNVKDPSGNPINYERLEFLGDAMLGSVIASHLYQEVPEGDEGYLTKMRSKIVSRKHLNELGKDLNLIRFVKSNIPNDQFGVNIHGNIFEALVGAIYLDRGYKYCNRFIYNRVIEPYVDIETLEGRVISYKSLLIEWCQKQKKEFNYQVYEDTGRDELKHFAVKLWIDKKVIAKARATSKKKAEEKASKRAYYALQNKMN.

In terms of domain architecture, RNase III spans 19 to 144; that stretch reads FNTLHKLLGF…LVGAIYLDRG (126 aa). E61 serves as a coordination point for Mg(2+). D65 is an active-site residue. Residues N130 and E133 each coordinate Mg(2+). Residue E133 is part of the active site. Positions 172–240 constitute a DRBM domain; that stretch reads SYKSLLIEWC…SKRAYYALQN (69 aa).

Belongs to the ribonuclease III family. As to quaternary structure, homodimer. It depends on Mg(2+) as a cofactor.

The protein resides in the cytoplasm. The catalysed reaction is Endonucleolytic cleavage to 5'-phosphomonoester.. Functionally, digests double-stranded RNA. Involved in the processing of primary rRNA transcript to yield the immediate precursors to the large and small rRNAs (23S and 16S). Processes some mRNAs, and tRNAs when they are encoded in the rRNA operon. Processes pre-crRNA and tracrRNA of type II CRISPR loci if present in the organism. This is Ribonuclease 3 (rnc) from Zunongwangia profunda (strain DSM 18752 / CCTCC AB 206139 / SM-A87) (Wangia profunda).